Consider the following 410-residue polypeptide: Peptidase T (410 aa).

Residues 11 to 30 (RYAEIDTQSDPDSESTPSTE) are disordered. Position 78 (H78) interacts with Zn(2+). Residue D80 is part of the active site. D140 is a Zn(2+) binding site. E174 (proton acceptor) is an active-site residue. Positions 175, 197, and 379 each coordinate Zn(2+).

It belongs to the peptidase M20B family. Zn(2+) is required as a cofactor.

Its subcellular location is the cytoplasm. The enzyme catalyses Release of the N-terminal residue from a tripeptide.. Cleaves the N-terminal amino acid of tripeptides. This is Peptidase T from Staphylococcus carnosus (strain TM300).